Reading from the N-terminus, the 248-residue chain is Agamous-like MADS-box protein AGL1 (248 aa).

In terms of domain architecture, MADS-box spans 18–72 (RGKIEIKRIENTTNRQVTFCKRRNGLLKKAYELSVLCDAEVALVIFSTRGRLYEY). One can recognise a K-box domain in the interval 102–192 (TQYYQQEASK…RAKIAEGARL (91 aa)).

In terms of assembly, interacts with AGL15 and AGL16.

The protein localises to the nucleus. Functionally, probable transcription factor. Interacts genetically with TT16/AGL32 in a partially antagonistic manner during flower development. Is essential for the coordination of cell divisions in ovule, seed coat development and endosperm formation. This Arabidopsis thaliana (Mouse-ear cress) protein is Agamous-like MADS-box protein AGL1 (AGL1).